Here is a 510-residue protein sequence, read N- to C-terminus: NAD(P)H-quinone oxidoreductase subunit 2 B, chloroplastic (510 aa).

A run of 13 helical transmembrane segments spans residues 24–44 (LLLF…GLIL), 59–79 (WFYF…LFRW), 99–119 (IFQF…VEYI), 124–144 (MAIT…MFLC), 150–170 (ITIF…SGYT), 184–204 (LLMG…LYGL), 229–249 (ISIA…LAPF), 295–315 (WHLL…LIAI), 323–343 (MLAY…IVGD), 354–374 (YMLF…LFGL), 395–415 (ALSL…AGFF), 418–438 (LHLF…IGLL), and 484–504 (MIVC…ILAI).

Belongs to the complex I subunit 2 family. NDH is composed of at least 16 different subunits, 5 of which are encoded in the nucleus.

The protein resides in the plastid. Its subcellular location is the chloroplast thylakoid membrane. It carries out the reaction a plastoquinone + NADH + (n+1) H(+)(in) = a plastoquinol + NAD(+) + n H(+)(out). The catalysed reaction is a plastoquinone + NADPH + (n+1) H(+)(in) = a plastoquinol + NADP(+) + n H(+)(out). Functionally, NDH shuttles electrons from NAD(P)H:plastoquinone, via FMN and iron-sulfur (Fe-S) centers, to quinones in the photosynthetic chain and possibly in a chloroplast respiratory chain. The immediate electron acceptor for the enzyme in this species is believed to be plastoquinone. Couples the redox reaction to proton translocation, and thus conserves the redox energy in a proton gradient. The protein is NAD(P)H-quinone oxidoreductase subunit 2 B, chloroplastic of Acorus calamus (Sweet flag).